Consider the following 443-residue polypeptide: Xaa-Pro dipeptidase (443 aa).

Residues D246, D257, H339, E384, and E423 each contribute to the Mn(2+) site.

Belongs to the peptidase M24B family. Bacterial-type prolidase subfamily. Mn(2+) is required as a cofactor.

It catalyses the reaction Xaa-L-Pro dipeptide + H2O = an L-alpha-amino acid + L-proline. Its function is as follows. Splits dipeptides with a prolyl residue in the C-terminal position. The protein is Xaa-Pro dipeptidase of Yersinia pseudotuberculosis serotype I (strain IP32953).